A 452-amino-acid polypeptide reads, in one-letter code: Bifunctional protein GlmU (452 aa).

Residues 1–231 form a pyrophosphorylase region; it reads MSRTCLAVIL…EAELAGCNNR (231 aa). Residues 10–13, lysine 24, glutamine 77, 82–83, 105–107, glycine 143, glutamate 157, asparagine 172, and asparagine 229 contribute to the UDP-N-acetyl-alpha-D-glucosamine site; these read LAAG, GT, and YGD. Aspartate 107 is a binding site for Mg(2+). Asparagine 229 provides a ligand contact to Mg(2+). The interval 232 to 252 is linker; the sequence is AELAVIEKLWQERRRHELMLS. The tract at residues 253-452 is N-acetyltransferase; sequence GVSMIAPETV…MAIKAFSGKV (200 aa). Positions 318 and 336 each coordinate UDP-N-acetyl-alpha-D-glucosamine. Histidine 348 (proton acceptor) is an active-site residue. Residues tyrosine 351 and asparagine 362 each coordinate UDP-N-acetyl-alpha-D-glucosamine. Residues alanine 365, 371 to 372, serine 390, serine 408, and arginine 425 contribute to the acetyl-CoA site; that span reads NY.

In the N-terminal section; belongs to the N-acetylglucosamine-1-phosphate uridyltransferase family. The protein in the C-terminal section; belongs to the transferase hexapeptide repeat family. As to quaternary structure, homotrimer. The cofactor is Mg(2+).

It localises to the cytoplasm. It catalyses the reaction alpha-D-glucosamine 1-phosphate + acetyl-CoA = N-acetyl-alpha-D-glucosamine 1-phosphate + CoA + H(+). It carries out the reaction N-acetyl-alpha-D-glucosamine 1-phosphate + UTP + H(+) = UDP-N-acetyl-alpha-D-glucosamine + diphosphate. It functions in the pathway nucleotide-sugar biosynthesis; UDP-N-acetyl-alpha-D-glucosamine biosynthesis; N-acetyl-alpha-D-glucosamine 1-phosphate from alpha-D-glucosamine 6-phosphate (route II): step 2/2. The protein operates within nucleotide-sugar biosynthesis; UDP-N-acetyl-alpha-D-glucosamine biosynthesis; UDP-N-acetyl-alpha-D-glucosamine from N-acetyl-alpha-D-glucosamine 1-phosphate: step 1/1. It participates in bacterial outer membrane biogenesis; LPS lipid A biosynthesis. In terms of biological role, catalyzes the last two sequential reactions in the de novo biosynthetic pathway for UDP-N-acetylglucosamine (UDP-GlcNAc). The C-terminal domain catalyzes the transfer of acetyl group from acetyl coenzyme A to glucosamine-1-phosphate (GlcN-1-P) to produce N-acetylglucosamine-1-phosphate (GlcNAc-1-P), which is converted into UDP-GlcNAc by the transfer of uridine 5-monophosphate (from uridine 5-triphosphate), a reaction catalyzed by the N-terminal domain. The sequence is that of Bifunctional protein GlmU from Allorhizobium ampelinum (strain ATCC BAA-846 / DSM 112012 / S4) (Agrobacterium vitis (strain S4)).